The chain runs to 364 residues: tRNA 2-selenouridine synthase (364 aa).

In terms of domain architecture, Rhodanese spans 14 to 137 (LIADTPIIDV…LRQTTIQATI (124 aa)). The S-selanylcysteine intermediate role is filled by cysteine 97.

The protein belongs to the SelU family. In terms of assembly, monomer.

It carries out the reaction 5-methylaminomethyl-2-thiouridine(34) in tRNA + selenophosphate + (2E)-geranyl diphosphate + H2O + H(+) = 5-methylaminomethyl-2-selenouridine(34) in tRNA + (2E)-thiogeraniol + phosphate + diphosphate. The enzyme catalyses 5-methylaminomethyl-2-thiouridine(34) in tRNA + (2E)-geranyl diphosphate = 5-methylaminomethyl-S-(2E)-geranyl-thiouridine(34) in tRNA + diphosphate. The catalysed reaction is 5-methylaminomethyl-S-(2E)-geranyl-thiouridine(34) in tRNA + selenophosphate + H(+) = 5-methylaminomethyl-2-(Se-phospho)selenouridine(34) in tRNA + (2E)-thiogeraniol. It catalyses the reaction 5-methylaminomethyl-2-(Se-phospho)selenouridine(34) in tRNA + H2O = 5-methylaminomethyl-2-selenouridine(34) in tRNA + phosphate. Involved in the post-transcriptional modification of the uridine at the wobble position (U34) of tRNA(Lys), tRNA(Glu) and tRNA(Gln). Catalyzes the conversion of 2-thiouridine (S2U-RNA) to 2-selenouridine (Se2U-RNA). Acts in a two-step process involving geranylation of 2-thiouridine (S2U) to S-geranyl-2-thiouridine (geS2U) and subsequent selenation of the latter derivative to 2-selenouridine (Se2U) in the tRNA chain. The chain is tRNA 2-selenouridine synthase from Escherichia coli O139:H28 (strain E24377A / ETEC).